Reading from the N-terminus, the 564-residue chain is Dihydroxy-acid dehydratase (564 aa).

C51 provides a ligand contact to [2Fe-2S] cluster. D83 serves as a coordination point for Mg(2+). C124 is a [2Fe-2S] cluster binding site. Residues D125 and K126 each coordinate Mg(2+). The residue at position 126 (K126) is an N6-carboxylysine. C196 contributes to the [2Fe-2S] cluster binding site. E448 contacts Mg(2+). S474 serves as the catalytic Proton acceptor.

The protein belongs to the IlvD/Edd family. As to quaternary structure, homodimer. [2Fe-2S] cluster is required as a cofactor. It depends on Mg(2+) as a cofactor.

The catalysed reaction is (2R)-2,3-dihydroxy-3-methylbutanoate = 3-methyl-2-oxobutanoate + H2O. It carries out the reaction (2R,3R)-2,3-dihydroxy-3-methylpentanoate = (S)-3-methyl-2-oxopentanoate + H2O. It participates in amino-acid biosynthesis; L-isoleucine biosynthesis; L-isoleucine from 2-oxobutanoate: step 3/4. The protein operates within amino-acid biosynthesis; L-valine biosynthesis; L-valine from pyruvate: step 3/4. In terms of biological role, functions in the biosynthesis of branched-chain amino acids. Catalyzes the dehydration of (2R,3R)-2,3-dihydroxy-3-methylpentanoate (2,3-dihydroxy-3-methylvalerate) into 2-oxo-3-methylpentanoate (2-oxo-3-methylvalerate) and of (2R)-2,3-dihydroxy-3-methylbutanoate (2,3-dihydroxyisovalerate) into 2-oxo-3-methylbutanoate (2-oxoisovalerate), the penultimate precursor to L-isoleucine and L-valine, respectively. This chain is Dihydroxy-acid dehydratase, found in Pyrobaculum calidifontis (strain DSM 21063 / JCM 11548 / VA1).